We begin with the raw amino-acid sequence, 409 residues long: PPE family protein PPE32 (409 aa).

Belongs to the mycobacterial PPE family. In terms of assembly, interacts with host Toll-like receptor 2 (TLR2).

Its subcellular location is the secreted. The protein localises to the cell wall. The protein resides in the cell surface. Its function is as follows. Virulence factor that modulates the production of host cytokines. This chain is PPE family protein PPE32, found in Mycobacterium tuberculosis (strain CDC 1551 / Oshkosh).